A 347-amino-acid polypeptide reads, in one-letter code: Haptoglobin (347 aa).

Residues 1–18 form the signal peptide; sequence MSDLGAVVALLLWGQLFA. The Sushi domain occupies 31–88; sequence DGCPKPPMIANGYVEHLVRYQCKNYYRLRTEGDGVYTLNNEKQWTNKAVGDKLPECEA. 2 cysteine pairs are disulfide-bonded: Cys52–Cys86 and Cys90–Cys207. The tract at residues 103-347 is serine protease; sequence ILGGHLDAKG…DWVQKTIAEN (245 aa). Asn125, Asn148, Asn152, Asn182, and Asn232 each carry an N-linked (GlcNAc...) asparagine glycan. Intrachain disulfides connect Cys250-Cys281 and Cys292-Cys322. Positions 259–264 are interaction with CD163; that stretch reads VPEKKT.

Belongs to the peptidase S1 family. Tetramer of two alpha and two beta chains; disulfide-linked. The hemoglobin/haptoglobin complex is composed of a haptoglobin dimer bound to two hemoglobin alpha-beta dimers. Interacts with CD163. Interacts with ERGIC3. In terms of tissue distribution, expressed by the liver and secreted in plasma.

The protein localises to the secreted. Functionally, as a result of hemolysis, hemoglobin is found to accumulate in the kidney and is secreted in the urine. Haptoglobin captures, and combines with free plasma hemoglobin to allow hepatic recycling of heme iron and to prevent kidney damage. Haptoglobin also acts as an antioxidant, has antibacterial activity and plays a role in modulating many aspects of the acute phase response. Hemoglobin/haptoglobin complexes are rapidly cleared by the macrophage CD163 scavenger receptor expressed on the surface of liver Kupfer cells through an endocytic lysosomal degradation pathway. The protein is Haptoglobin (HP) of Papio hamadryas (Hamadryas baboon).